The following is a 269-amino-acid chain: Formamidopyrimidine-DNA glycosylase (269 aa).

Proline 2 (schiff-base intermediate with DNA) is an active-site residue. The Proton donor role is filled by glutamate 3. Catalysis depends on lysine 57, which acts as the Proton donor; for beta-elimination activity. Histidine 90, arginine 109, and lysine 150 together coordinate DNA. The FPG-type zinc-finger motif lies at 235-269; that stretch reads FVYGRAGEPCRICGEQIESIKLGQRSTFFCRHCQY. Arginine 259 (proton donor; for delta-elimination activity) is an active-site residue.

Belongs to the FPG family. In terms of assembly, monomer. Zn(2+) is required as a cofactor.

It carries out the reaction Hydrolysis of DNA containing ring-opened 7-methylguanine residues, releasing 2,6-diamino-4-hydroxy-5-(N-methyl)formamidopyrimidine.. The enzyme catalyses 2'-deoxyribonucleotide-(2'-deoxyribose 5'-phosphate)-2'-deoxyribonucleotide-DNA = a 3'-end 2'-deoxyribonucleotide-(2,3-dehydro-2,3-deoxyribose 5'-phosphate)-DNA + a 5'-end 5'-phospho-2'-deoxyribonucleoside-DNA + H(+). Involved in base excision repair of DNA damaged by oxidation or by mutagenic agents. Acts as a DNA glycosylase that recognizes and removes damaged bases. Has a preference for oxidized purines, such as 7,8-dihydro-8-oxoguanine (8-oxoG). Has AP (apurinic/apyrimidinic) lyase activity and introduces nicks in the DNA strand. Cleaves the DNA backbone by beta-delta elimination to generate a single-strand break at the site of the removed base with both 3'- and 5'-phosphates. This chain is Formamidopyrimidine-DNA glycosylase, found in Photorhabdus laumondii subsp. laumondii (strain DSM 15139 / CIP 105565 / TT01) (Photorhabdus luminescens subsp. laumondii).